The following is a 288-amino-acid chain: Serine/threonine-protein kinase pef1 (288 aa).

Residues 3-285 (YQRLEKLGEG…GQDALQHAWF (283 aa)) enclose the Protein kinase domain. Residues 9–17 (LGEGTYAHV) and Lys-32 each bind ATP. Thr-13 carries the phosphothreonine modification. The residue at position 14 (Tyr-14) is a Phosphotyrosine. The active-site Proton acceptor is Asp-126.

The protein belongs to the protein kinase superfamily. CMGC Ser/Thr protein kinase family. CDC2/CDKX subfamily. In terms of assembly, interacts with the pas1 cyclin.

The enzyme catalyses L-seryl-[protein] + ATP = O-phospho-L-seryl-[protein] + ADP + H(+). The catalysed reaction is L-threonyl-[protein] + ATP = O-phospho-L-threonyl-[protein] + ADP + H(+). The protein is Serine/threonine-protein kinase pef1 (pef1) of Schizosaccharomyces pombe (strain 972 / ATCC 24843) (Fission yeast).